Reading from the N-terminus, the 468-residue chain is Probable Xaa-Pro aminopeptidase PEPP (468 aa).

Mn(2+) is bound by residues Asp-264, Asp-275, Glu-398, and Glu-438.

Belongs to the peptidase M24B family. Mn(2+) serves as cofactor.

It carries out the reaction Release of any N-terminal amino acid, including proline, that is linked to proline, even from a dipeptide or tripeptide.. Catalyzes the removal of a penultimate prolyl residue from the N-termini of peptides. In Paracoccidioides lutzii (strain ATCC MYA-826 / Pb01) (Paracoccidioides brasiliensis), this protein is Probable Xaa-Pro aminopeptidase PEPP (PEPP).